The primary structure comprises 256 residues: tRNA-cytidine(32) 2-sulfurtransferase (256 aa).

The PP-loop motif signature appears at 35–40 (SGGKDS). Residues Cys110, Cys113, and Cys201 each contribute to the [4Fe-4S] cluster site.

This sequence belongs to the TtcA family. As to quaternary structure, homodimer. Mg(2+) is required as a cofactor. It depends on [4Fe-4S] cluster as a cofactor.

The protein resides in the cytoplasm. It catalyses the reaction cytidine(32) in tRNA + S-sulfanyl-L-cysteinyl-[cysteine desulfurase] + AH2 + ATP = 2-thiocytidine(32) in tRNA + L-cysteinyl-[cysteine desulfurase] + A + AMP + diphosphate + H(+). It participates in tRNA modification. Its function is as follows. Catalyzes the ATP-dependent 2-thiolation of cytidine in position 32 of tRNA, to form 2-thiocytidine (s(2)C32). The sulfur atoms are provided by the cysteine/cysteine desulfurase (IscS) system. In Coxiella burnetii (strain CbuG_Q212) (Coxiella burnetii (strain Q212)), this protein is tRNA-cytidine(32) 2-sulfurtransferase.